The chain runs to 132 residues: Small ribosomal subunit protein uS11 (132 aa).

This sequence belongs to the universal ribosomal protein uS11 family. In terms of assembly, part of the 30S ribosomal subunit. Interacts with proteins S7 and S18. Binds to IF-3.

Located on the platform of the 30S subunit, it bridges several disparate RNA helices of the 16S rRNA. Forms part of the Shine-Dalgarno cleft in the 70S ribosome. This is Small ribosomal subunit protein uS11 from Alcanivorax borkumensis (strain ATCC 700651 / DSM 11573 / NCIMB 13689 / SK2).